Here is a 117-residue protein sequence, read N- to C-terminus: G antigen 5 (117 aa).

A disordered region spans residues 1–117 (MSWRGRSTYY…PEEGEKQSQC (117 aa)). Composition is skewed to acidic residues over residues 32–45 (FSDE…EEGE) and 87–96 (ECEDGPDGQE). Residues 103-117 (EEVKTPEEGEKQSQC) are compositionally biased toward basic and acidic residues.

The protein belongs to the GAGE family. As to expression, expressed in a variety of tumor tissues but not in normal tissues, except testis.

This is G antigen 5 (GAGE5) from Homo sapiens (Human).